A 115-amino-acid chain; its full sequence is Large ribosomal subunit protein bL35m (115 aa).

The protein belongs to the bacterial ribosomal protein bL35 family.

It localises to the mitochondrion. This Saccharomyces cerevisiae (strain YJM789) (Baker's yeast) protein is Large ribosomal subunit protein bL35m.